A 327-amino-acid polypeptide reads, in one-letter code: GTPase Obg (327 aa).

The 159-residue stretch at 1–159 (MQFIDQANII…WEVQLELKLL (159 aa)) folds into the Obg domain. The region spanning 160–327 (AEVGIIGLPN…SLLSEVWKRI (168 aa)) is the OBG-type G domain. Residues 166–173 (GLPNAGKS), 191–195 (FTTLI), 213–216 (DIPG), 280–283 (NKME), and 309–311 (SSS) contribute to the ATP site. Mg(2+) contacts are provided by S173 and T193.

It belongs to the TRAFAC class OBG-HflX-like GTPase superfamily. OBG GTPase family. As to quaternary structure, monomer. Mg(2+) is required as a cofactor.

It is found in the cytoplasm. In terms of biological role, an essential GTPase which binds GTP, GDP and possibly (p)ppGpp with moderate affinity, with high nucleotide exchange rates and a fairly low GTP hydrolysis rate. Plays a role in control of the cell cycle, stress response, ribosome biogenesis and in those bacteria that undergo differentiation, in morphogenesis control. This Prochlorococcus marinus (strain MIT 9301) protein is GTPase Obg.